Reading from the N-terminus, the 214-residue chain is Galactokinase (214 aa).

Positions 47, 53, 54, and 56 each coordinate alpha-D-galactose. ATP-binding residues include glycine 149, glycine 151, serine 153, and serine 154. Aspartate 199 provides a ligand contact to alpha-D-galactose. Aspartate 199 serves as the catalytic Proton acceptor.

It belongs to the GHMP kinase family. GalK subfamily.

The enzyme catalyses alpha-D-galactose + ATP = alpha-D-galactose 1-phosphate + ADP + H(+). It participates in carbohydrate metabolism; galactose metabolism. In terms of biological role, galactokinase is a key enzyme in the galactose metabolism where it catalyzes the conversion of alpha-D-galactose to galactose 1-phosphate. Can also induce the transcription of the gal genes in response to the organism being challenged with galactose as the sole source of carbon. The sequence is that of Galactokinase from Candida maltosa (Yeast).